A 67-amino-acid chain; its full sequence is Spiniferin (67 aa).

An N-terminal signal peptide occupies residues 1-23 (MKTQLAILLITLVLFQMFSQSDA). Leucine 36 is modified (leucine amide). The propeptide occupies 40 to 67 (GLNDLSDLDELFDGEISKADLDFLREIM).

Belongs to the non-disulfide-bridged peptide (NDBP) superfamily. Short antimicrobial peptide (group 4) family. As to expression, expressed by the venom gland.

It localises to the secreted. Its subcellular location is the target cell membrane. Functionally, alpha-helical and amphipathic peptide with weak antimicrobial activities against both Gram-positive (MIC=41 uM to &gt;82 uM) and Gram-negative (MIC&gt;82 uM) bacteria. It has extremely weak hemolytic activity against human erythrocytes. The polypeptide is Spiniferin (Heterometrus spinifer (Asia giant forest scorpion)).